The primary structure comprises 227 residues: Cytochrome c oxidase subunit 2 (227 aa).

Topologically, residues 1-14 are mitochondrial intermembrane; the sequence is MAYPFQLGLQDATS. The chain crosses the membrane as a helical span at residues 15-45; the sequence is PIMEELLHFHDHTLMIVFLISSLVLYIISSM. At 46-59 the chain is on the mitochondrial matrix side; it reads LTTKLTHTSTMDAQ. The helical transmembrane segment at 60-87 threads the bilayer; it reads EVETVWTILPAIILVLIALPSLRILYMM. The Mitochondrial intermembrane segment spans residues 88–227; sequence DEINNPSLTV…YFETWSALML (140 aa). Cu cation is bound by residues H161, C196, E198, C200, H204, and M207. E198 provides a ligand contact to Mg(2+). Phosphotyrosine is present on Y218.

It belongs to the cytochrome c oxidase subunit 2 family. As to quaternary structure, component of the cytochrome c oxidase (complex IV, CIV), a multisubunit enzyme composed of 14 subunits. The complex is composed of a catalytic core of 3 subunits MT-CO1, MT-CO2 and MT-CO3, encoded in the mitochondrial DNA, and 11 supernumerary subunits COX4I, COX5A, COX5B, COX6A, COX6B, COX6C, COX7A, COX7B, COX7C, COX8 and NDUFA4, which are encoded in the nuclear genome. The complex exists as a monomer or a dimer and forms supercomplexes (SCs) in the inner mitochondrial membrane with NADH-ubiquinone oxidoreductase (complex I, CI) and ubiquinol-cytochrome c oxidoreductase (cytochrome b-c1 complex, complex III, CIII), resulting in different assemblies (supercomplex SCI(1)III(2)IV(1) and megacomplex MCI(2)III(2)IV(2)). Found in a complex with TMEM177, COA6, COX18, COX20, SCO1 and SCO2. Interacts with TMEM177 in a COX20-dependent manner. Interacts with COX20. Interacts with COX16. Cu cation is required as a cofactor.

The protein resides in the mitochondrion inner membrane. The catalysed reaction is 4 Fe(II)-[cytochrome c] + O2 + 8 H(+)(in) = 4 Fe(III)-[cytochrome c] + 2 H2O + 4 H(+)(out). Component of the cytochrome c oxidase, the last enzyme in the mitochondrial electron transport chain which drives oxidative phosphorylation. The respiratory chain contains 3 multisubunit complexes succinate dehydrogenase (complex II, CII), ubiquinol-cytochrome c oxidoreductase (cytochrome b-c1 complex, complex III, CIII) and cytochrome c oxidase (complex IV, CIV), that cooperate to transfer electrons derived from NADH and succinate to molecular oxygen, creating an electrochemical gradient over the inner membrane that drives transmembrane transport and the ATP synthase. Cytochrome c oxidase is the component of the respiratory chain that catalyzes the reduction of oxygen to water. Electrons originating from reduced cytochrome c in the intermembrane space (IMS) are transferred via the dinuclear copper A center (CU(A)) of subunit 2 and heme A of subunit 1 to the active site in subunit 1, a binuclear center (BNC) formed by heme A3 and copper B (CU(B)). The BNC reduces molecular oxygen to 2 water molecules using 4 electrons from cytochrome c in the IMS and 4 protons from the mitochondrial matrix. The protein is Cytochrome c oxidase subunit 2 (MT-CO2) of Speothos venaticus (Bush dog).